A 112-amino-acid chain; its full sequence is Nucleoid-associated protein FTW_0607 (112 aa).

A disordered region spans residues 1-27; it reads MNFDMSKLMQQAQKMQEQMKKAQQERE. Positions 17-27 are enriched in basic and acidic residues; the sequence is EQMKKAQQERE.

The protein belongs to the YbaB/EbfC family. Homodimer.

The protein localises to the cytoplasm. Its subcellular location is the nucleoid. Its function is as follows. Binds to DNA and alters its conformation. May be involved in regulation of gene expression, nucleoid organization and DNA protection. The sequence is that of Nucleoid-associated protein FTW_0607 from Francisella tularensis subsp. tularensis (strain WY96-3418).